Consider the following 154-residue polypeptide: MKTFSAKPAEVTKKWIVIDATGLVVGRLATLVANRLRGKHLPTYTPHVDCGDHVIIVNAAKVVLTGRKRENKVYYHHTGFIGGIKERTAKSILEGRFPERVVEKAIERMIPRGPLGRMQMGNLRVYGGPDHPHEAQQPEPLNVAVMNRKNMRAA.

It belongs to the universal ribosomal protein uL13 family. Part of the 50S ribosomal subunit.

Its function is as follows. This protein is one of the early assembly proteins of the 50S ribosomal subunit, although it is not seen to bind rRNA by itself. It is important during the early stages of 50S assembly. This is Large ribosomal subunit protein uL13 from Rhodopseudomonas palustris (strain BisB18).